Reading from the N-terminus, the 469-residue chain is GTPase Der (469 aa).

2 EngA-type G domains span residues 30 to 193 (PVLA…PEVA) and 203 to 376 (RRVA…ASWD). GTP is bound by residues 36–43 (GRPNVGKS), 83–87 (DTGGW), 145–148 (NKVD), 209–216 (GKPNVGKS), 256–260 (DTAGL), and 321–324 (NKWD). Residues 377–459 (TRIPTGPLNS…PIRINVRVRE (83 aa)) enclose the KH-like domain.

The protein belongs to the TRAFAC class TrmE-Era-EngA-EngB-Septin-like GTPase superfamily. EngA (Der) GTPase family. As to quaternary structure, associates with the 50S ribosomal subunit.

Functionally, GTPase that plays an essential role in the late steps of ribosome biogenesis. The chain is GTPase Der from Mycobacterium ulcerans (strain Agy99).